A 74-amino-acid polypeptide reads, in one-letter code: RNA-binding protein Hfq (74 aa).

The Sm domain occupies 9-69; it reads DQFLNQLRKE…ISTFAPQKNV (61 aa).

This sequence belongs to the Hfq family. As to quaternary structure, homohexamer.

Its function is as follows. RNA chaperone that binds small regulatory RNA (sRNAs) and mRNAs to facilitate mRNA translational regulation in response to envelope stress, environmental stress and changes in metabolite concentrations. Also binds with high specificity to tRNAs. This is RNA-binding protein Hfq from Anoxybacillus flavithermus (strain DSM 21510 / WK1).